Here is a 269-residue protein sequence, read N- to C-terminus: Tryptophan synthase alpha chain (269 aa).

Catalysis depends on proton acceptor residues Glu49 and Asp60.

This sequence belongs to the TrpA family. As to quaternary structure, tetramer of two alpha and two beta chains.

The enzyme catalyses (1S,2R)-1-C-(indol-3-yl)glycerol 3-phosphate + L-serine = D-glyceraldehyde 3-phosphate + L-tryptophan + H2O. It functions in the pathway amino-acid biosynthesis; L-tryptophan biosynthesis; L-tryptophan from chorismate: step 5/5. The alpha subunit is responsible for the aldol cleavage of indoleglycerol phosphate to indole and glyceraldehyde 3-phosphate. The chain is Tryptophan synthase alpha chain from Actinobacillus pleuropneumoniae serotype 3 (strain JL03).